A 415-amino-acid chain; its full sequence is Teichoic acid D-alanyltransferase (415 aa).

Residues 1 to 16 lie on the Extracellular side of the membrane; that stretch reads MIDFLKQLPHLEPYGN. Residues 17–36 traverse the membrane as a helical segment; it reads PFYFIYLGIALLPIFIGLFF. Residues 37-40 lie on the Cytoplasmic side of the membrane; it reads KKRF. A helical membrane pass occupies residues 41–56; sequence AIYECLVSITFIVLAL. Residues 57–60 are Extracellular-facing; that stretch reads TGTH. Residues 61-87 form a helical membrane-spanning segment; it reads ASQILALLFYIVWQIIWVYSYKRYRSQ. At 88–90 the chain is on the cytoplasmic side; sequence RDN. A helical membrane pass occupies residues 91-115; sequence KWVFYLHSFLVVLPLILVKVEPTIN. Residues 116-125 lie on the Extracellular side of the membrane; sequence GTQSLLNFLG. Residues 126-142 traverse the membrane as a helical segment; it reads ISYLTFRAVGMIIEMRD. At 143-149 the chain is on the cytoplasmic side; it reads GVLKEFT. The stretch at 150–179 is an intramembrane region; that stretch reads LGEFLRFMLFMPTFTSGPIDRFKRFNEDYQ. Residues 180–183 lie on the Cytoplasmic side of the membrane; sequence SIPN. A helical transmembrane segment spans residues 184-227; it reads RDELLNMLEQAVKYIMLGFLYKFVLAQIFGSMLLPPLKAQALSQ. Topologically, residues 228-232 are extracellular; it reads GGIFN. The chain crosses the membrane as a helical span at residues 233 to 264; sequence LPTLGVMYVYGFDLFFDFAGYSMFALAVSNLM. At 265–274 the chain is on the cytoplasmic side; sequence GIKSPINFDK. Residues 275–311 lie within the membrane without spanning it; the sequence is PFISRDMKEFWNRWHMSLSFWFRDFVFMRLVIVLMRN. Residues 312 to 316 lie on the Cytoplasmic side of the membrane; the sequence is KVFKN. A helical transmembrane segment spans residues 317–336; that stretch reads RNTTSNVAYIINMMVMGFWH. The active site involves His336. Residues 337-339 are Extracellular-facing; that stretch reads GIT. A helical membrane pass occupies residues 340 to 373; that stretch reads WYYIAYGIFHGIGLVINDAWLRKKKTINKDRKKA. Topologically, residues 374–381 are cytoplasmic; sequence GLKPLPEN. The chain crosses the membrane as a helical span at residues 382 to 404; sequence KWTKALGIFITFNTVMLSFLIFS. The Extracellular segment spans residues 405 to 415; it reads GFLNDLWFTKK.

This sequence belongs to the membrane-bound acyltransferase family.

The protein resides in the cell membrane. Its pathway is cell wall biogenesis; lipoteichoic acid biosynthesis. Its function is as follows. O-acyltransferase that catalyzes D-alanylation of both teichoic acid and lipoteichoic acid (LTA). D-alanylation of LTA plays an important role in modulating the properties of the cell wall in Gram-positive bacteria, influencing the net charge of the cell wall. Catalyzes D-alanylation from DltC carrier protein. The polypeptide is Teichoic acid D-alanyltransferase (Streptococcus thermophilus (strain ATCC BAA-250 / LMG 18311)).